Reading from the N-terminus, the 192-residue chain is Ribosome maturation factor RimM (192 aa).

Positions 116-192 (PGEYYWVDLI…RIIVDWQPDY (77 aa)) constitute a PRC barrel domain.

This sequence belongs to the RimM family. Binds ribosomal protein uS19.

Its subcellular location is the cytoplasm. In terms of biological role, an accessory protein needed during the final step in the assembly of 30S ribosomal subunit, possibly for assembly of the head region. Essential for efficient processing of 16S rRNA. May be needed both before and after RbfA during the maturation of 16S rRNA. It has affinity for free ribosomal 30S subunits but not for 70S ribosomes. This Verminephrobacter eiseniae (strain EF01-2) protein is Ribosome maturation factor RimM.